The sequence spans 1018 residues: UPF0182 protein Francci3_3781 (1018 aa).

The next 7 membrane-spanning stretches (helical) occupy residues 13–33 (TKVL…IAIF), 60–80 (ILLF…NIVL), 109–129 (MLLI…LSAA), 167–187 (FLLG…LLTH), 208–228 (AHIS…YYLD), 250–270 (AVLP…VLFI), and 283–303 (LGAG…PAIV). 2 stretches are compositionally biased toward low complexity: residues 886 to 896 (TTDAGQDGTPA) and 960 to 980 (SSPA…SVPA). Disordered stretches follow at residues 886-920 (TTDA…AVGD) and 960-1018 (SSPA…PAPG). The span at 981 to 995 (SPVPASPAAKPPAPS) shows a compositional bias: pro residues.

It belongs to the UPF0182 family.

The protein localises to the cell membrane. The polypeptide is UPF0182 protein Francci3_3781 (Frankia casuarinae (strain DSM 45818 / CECT 9043 / HFP020203 / CcI3)).